We begin with the raw amino-acid sequence, 293 residues long: Proteinase T (293 aa).

Positions 1–12 are excised as a propeptide; sequence EFIEQDAVVTIS. One can recognise a Peptidase S8 domain in the interval 19–293; it reads PWGLARISSQ…VLINNGEGSA (275 aa). 2 cysteine pairs are disulfide-bonded: Cys-46–Cys-137 and Cys-192–Cys-262. Catalysis depends on charge relay system residues Asp-51, His-83, and Ser-238.

The protein belongs to the peptidase S8 family.

Its function is as follows. Serine proteinase. The chain is Proteinase T (PROT) from Parengyodontium album (Tritirachium album).